We begin with the raw amino-acid sequence, 578 residues long: ATP-dependent RNA helicase CHR1 (578 aa).

Positions 1 to 95 are disordered; it reads MDIFRILSRG…NETKAKEEEI (95 aa). 2 stretches are compositionally biased toward basic and acidic residues: residues 44–53 and 78–94; these read EVERETDFFH and NKEE…KEEE. Residues 131-159 carry the Q motif motif; that stretch reads DMIGRFHINKKVLSNLIDNEFVEPTPIQC. The 178-residue stretch at 162-339 folds into the Helicase ATP-binding domain; the sequence is IPITLNNRDL…HSIMKDPLRI (178 aa). Position 175–182 (175–182) interacts with ATP; that stretch reads APTGSGKT. The short motif at 286-289 is the DEAD box element; that stretch reads DEAD. The 165-residue stretch at 350–514 folds into the Helicase C-terminal domain; it reads TIDQKLVFTG…GYSQWMEDMG (165 aa). Basic and acidic residues-rich tracts occupy residues 517-531 and 561-578; these read SKKE…EIQR and ESKQ…EREE. Residues 517-578 form a disordered region; it reads SKKEKKQIKT…ESHSNDEREE (62 aa).

Belongs to the DEAD box helicase family. DDX52/ROK1 subfamily. As to quaternary structure, interacts with the U3 snoRNA and is associated with the 90S and 40S pre-ribosomes.

Its subcellular location is the nucleus. It localises to the nucleolus. The enzyme catalyses ATP + H2O = ADP + phosphate + H(+). Functionally, ATP-dependent RNA helicase involved in 40S ribosomal subunit biogenesis. Required for the processing and cleavage of 35S pre-rRNA at sites A0, A1, and A2, leading to mature 18S rRNA. The polypeptide is ATP-dependent RNA helicase CHR1 (CHR1) (Candida albicans (strain SC5314 / ATCC MYA-2876) (Yeast)).